We begin with the raw amino-acid sequence, 307 residues long: Small ribosomal subunit biogenesis GTPase RsgA (307 aa).

The interval 1 to 21 (MPSEHPFSDGIPTPNPKETMN) is disordered. The region spanning 85–242 (RQDAWKTKLI…LIDSPGLQEF (158 aa)) is the CP-type G domain. GTP is bound by residues 135-138 (NKAD) and 184-192 (GQSGMGKST). Residues Cys-266, Cys-271, His-273, and Cys-279 each coordinate Zn(2+).

The protein belongs to the TRAFAC class YlqF/YawG GTPase family. RsgA subfamily. Monomer. Associates with 30S ribosomal subunit, binds 16S rRNA. Zn(2+) is required as a cofactor.

The protein localises to the cytoplasm. In terms of biological role, one of several proteins that assist in the late maturation steps of the functional core of the 30S ribosomal subunit. Helps release RbfA from mature subunits. May play a role in the assembly of ribosomal proteins into the subunit. Circularly permuted GTPase that catalyzes slow GTP hydrolysis, GTPase activity is stimulated by the 30S ribosomal subunit. This Neisseria meningitidis serogroup B (strain ATCC BAA-335 / MC58) protein is Small ribosomal subunit biogenesis GTPase RsgA.